We begin with the raw amino-acid sequence, 185 residues long: Peptidyl-tRNA hydrolase (185 aa).

Residue tyrosine 14 coordinates tRNA. Histidine 19 serves as the catalytic Proton acceptor. Phenylalanine 64, asparagine 66, and asparagine 112 together coordinate tRNA.

The protein belongs to the PTH family. In terms of assembly, monomer.

It localises to the cytoplasm. It carries out the reaction an N-acyl-L-alpha-aminoacyl-tRNA + H2O = an N-acyl-L-amino acid + a tRNA + H(+). Hydrolyzes ribosome-free peptidyl-tRNAs (with 1 or more amino acids incorporated), which drop off the ribosome during protein synthesis, or as a result of ribosome stalling. Its function is as follows. Catalyzes the release of premature peptidyl moieties from peptidyl-tRNA molecules trapped in stalled 50S ribosomal subunits, and thus maintains levels of free tRNAs and 50S ribosomes. This is Peptidyl-tRNA hydrolase from Levilactobacillus brevis (strain ATCC 367 / BCRC 12310 / CIP 105137 / JCM 1170 / LMG 11437 / NCIMB 947 / NCTC 947) (Lactobacillus brevis).